Consider the following 223-residue polypeptide: Lipoprotein-releasing system ATP-binding protein LolD (223 aa).

Positions 1–223 (MAKVFRSGST…DEVEPQSLPA (223 aa)) constitute an ABC transporter domain. 32–39 (GDSGSGKS) contacts ATP.

The protein belongs to the ABC transporter superfamily. Lipoprotein translocase (TC 3.A.1.125) family. The complex is composed of two ATP-binding proteins (LolD) and two transmembrane proteins (LolC and LolE).

It is found in the cell inner membrane. Functionally, part of the ABC transporter complex LolCDE involved in the translocation of mature outer membrane-directed lipoproteins, from the inner membrane to the periplasmic chaperone, LolA. Responsible for the formation of the LolA-lipoprotein complex in an ATP-dependent manner. The protein is Lipoprotein-releasing system ATP-binding protein LolD of Koribacter versatilis (strain Ellin345).